Here is a 106-residue protein sequence, read N- to C-terminus: UPF0060 membrane protein Bphy_5052 (106 aa).

4 helical membrane-spanning segments follow: residues 4–24 (LLLY…PWRW), 30–50 (SVWL…LLTF), 58–78 (VYAA…WCVD), and 82–102 (PSAW…IIAF).

This sequence belongs to the UPF0060 family.

The protein localises to the cell inner membrane. This chain is UPF0060 membrane protein Bphy_5052, found in Paraburkholderia phymatum (strain DSM 17167 / CIP 108236 / LMG 21445 / STM815) (Burkholderia phymatum).